The following is a 166-amino-acid chain: Interferon gamma (166 aa).

A signal peptide spans 1-23; that stretch reads MKYTSYILAFQLCVVLGSLGCYC. Pyrrolidone carboxylic acid is present on Gln-24. N-linked (GlcNAc...) asparagine glycosylation is found at Asn-48, Asn-86, and Asn-120.

It belongs to the type II (or gamma) interferon family. As to quaternary structure, homodimer. Interacts with IFNGR1 (via extracellular domain); this interaction promotes IFNGR1 dimerization. In terms of tissue distribution, released primarily from activated T lymphocytes.

Its subcellular location is the secreted. In terms of biological role, type II interferon produced by immune cells such as T-cells and NK cells that plays crucial roles in antimicrobial, antiviral, and antitumor responses by activating effector immune cells and enhancing antigen presentation. Primarily signals through the JAK-STAT pathway after interaction with its receptor IFNGR1 to affect gene regulation. Upon IFNG binding, IFNGR1 intracellular domain opens out to allow association of downstream signaling components JAK2, JAK1 and STAT1, leading to STAT1 activation, nuclear translocation and transcription of IFNG-regulated genes. Many of the induced genes are transcription factors such as IRF1 that are able to further drive regulation of a next wave of transcription. Plays a role in class I antigen presentation pathway by inducing a replacement of catalytic proteasome subunits with immunoproteasome subunits. In turn, increases the quantity, quality, and repertoire of peptides for class I MHC loading. Increases the efficiency of peptide generation also by inducing the expression of activator PA28 that associates with the proteasome and alters its proteolytic cleavage preference. Up-regulates as well MHC II complexes on the cell surface by promoting expression of several key molecules such as cathepsins B/CTSB, H/CTSH, and L/CTSL. Participates in the regulation of hematopoietic stem cells during development and under homeostatic conditions by affecting their development, quiescence, and differentiation. This is Interferon gamma (IFNG) from Callithrix jacchus (White-tufted-ear marmoset).